Consider the following 296-residue polypeptide: Cadherin-4 (296 aa).

3 Cadherin domains span residues 1 to 101 (NVPE…RPEF), 102 to 216 (INQV…PPEF), and 217 to 296 (TTST…MLTI). The Extracellular portion of the chain corresponds to 1–296 (NVPENSRGPF…ELNRAFMLTI (296 aa)). Residues Asn-107 and Asn-236 are each glycosylated (N-linked (GlcNAc...) asparagine).

It localises to the cell membrane. Its function is as follows. Cadherins are calcium-dependent cell adhesion proteins. They preferentially interact with themselves in a homophilic manner in connecting cells; cadherins may thus contribute to the sorting of heterogeneous cell types. May play an important role in retinal development. This is Cadherin-4 (Cdh4) from Rattus norvegicus (Rat).